The sequence spans 243 residues: Orotidine 5'-phosphate decarboxylase (243 aa).

Substrate-binding positions include Asp19, Lys41, 69-78 (DLKFFDIPAT), Thr124, Arg185, Gln194, Gly214, and Arg215. Lys71 serves as the catalytic Proton donor.

The protein belongs to the OMP decarboxylase family. Type 1 subfamily. Homodimer.

It carries out the reaction orotidine 5'-phosphate + H(+) = UMP + CO2. It participates in pyrimidine metabolism; UMP biosynthesis via de novo pathway; UMP from orotate: step 2/2. Functionally, catalyzes the decarboxylation of orotidine 5'-monophosphate (OMP) to uridine 5'-monophosphate (UMP). This chain is Orotidine 5'-phosphate decarboxylase, found in Xanthomonas axonopodis pv. citri (strain 306).